Reading from the N-terminus, the 460-residue chain is Xyloglucan 6-xylosyltransferase 1 (460 aa).

Topologically, residues 1–20 (MIEKCIGAHRFRRLQRFMRQ) are cytoplasmic. Residues 21 to 40 (GKVTILCLVLTVIVLRGTIG) traverse the membrane as a helical; Signal-anchor for type II membrane protein segment. At 41 to 460 (AGKFGTPEKD…KAAKLSTTTT (420 aa)) the chain is on the lumenal side. UDP-alpha-D-xylose contacts are provided by residues glycine 156 and 227 to 229 (DSD). The Mn(2+) site is built by aspartate 227 and aspartate 229. Histidine 346 contacts substrate. Residues histidine 377, glycine 380, and lysine 382 each contribute to the UDP-alpha-D-xylose site. Histidine 377 lines the Mn(2+) pocket. Substrate-binding positions include lysine 382 and 389–390 (DY). Asparagine 431 carries an N-linked (GlcNAc...) asparagine glycan.

The protein belongs to the glycosyltransferase 34 family. Forms homodimer. Interacts with XXT2. The cofactor is Mn(2+).

The protein resides in the golgi apparatus membrane. It carries out the reaction Transfers an alpha-D-xylosyl residue from UDP-D-xylose to a glucose residue in xyloglucan, forming an alpha-(1-&gt;6)-D-xylosyl-D-glucose linkage.. It functions in the pathway protein modification; protein glycosylation. In terms of biological role, xylosyltransferase specific to UDP-D-xylose that accepts both cellopentaose and cellohexaose as substrates, with a better use of cellohexaose, to produce xyloglucan. Adds preferentially the first xylosyl residue to the fourth glucosyl residue from the reducing end of both acceptors. Transfer one xylose mainly to the second glucose residue from the non-reducing end. The acceptor should have a minimum of four glucose residues. The polypeptide is Xyloglucan 6-xylosyltransferase 1 (Arabidopsis thaliana (Mouse-ear cress)).